Consider the following 904-residue polypeptide: Phosphoenolpyruvate carboxylase (904 aa).

Positions 52 to 71 (ISRRESDAPPSTLSEQLTGR) are disordered. Positions 60–70 (PPSTLSEQLTG) are enriched in polar residues. Active-site residues include His-151 and Lys-570.

This sequence belongs to the PEPCase type 1 family. Mg(2+) serves as cofactor.

It catalyses the reaction oxaloacetate + phosphate = phosphoenolpyruvate + hydrogencarbonate. Its function is as follows. Forms oxaloacetate, a four-carbon dicarboxylic acid source for the tricarboxylic acid cycle. The protein is Phosphoenolpyruvate carboxylase of Xanthomonas euvesicatoria pv. vesicatoria (strain 85-10) (Xanthomonas campestris pv. vesicatoria).